The primary structure comprises 311 residues: Non-homologous end joining protein Ku (311 aa).

A Ku domain is found at 26-210 (ISFGLVNIPI…NVNDKELQTA (185 aa)). Residues 269–311 (ASIDRTRRPNRETPAAAPAQAAEPKGAGDKKQKTTRKKASGTS) form a disordered region. Low complexity predominate over residues 282–293 (PAAAPAQAAEPK). Residues 301-311 (KTTRKKASGTS) are compositionally biased toward basic residues.

It belongs to the prokaryotic Ku family. In terms of assembly, homodimer. Interacts with LigD.

The protein resides in the spore core. With LigD forms a non-homologous end joining (NHEJ) DNA repair enzyme, which repairs dsDNA breaks with reduced fidelity. Binds linear dsDNA with 5'- and 3'- overhangs but not closed circular dsDNA nor ssDNA. Recruits and stimulates the ligase activity of LigD. Probably involved in DNA repair during spore germination. In Bacillus subtilis (strain 168), this protein is Non-homologous end joining protein Ku.